A 435-amino-acid chain; its full sequence is Protoheme IX farnesyltransferase, mitochondrial (435 aa).

The transit peptide at 1-35 directs the protein to the mitochondrion; sequence MPALCATYLIHSGNLRACLRIVPLTKPSVVIAYRH. 6 helical membrane-spanning segments follow: residues 135 to 155, 157 to 177, 212 to 232, 250 to 270, 324 to 344, and 401 to 421; these read VLVM…ATVL, LLSL…INMG, GVIG…LLGA, IINT…GWAA, VALR…YYGI, and FWVS…HKKG.

Belongs to the UbiA prenyltransferase family.

The protein localises to the mitochondrion membrane. Functionally, converts protoheme IX and farnesyl diphosphate to heme O. The protein is Protoheme IX farnesyltransferase, mitochondrial (COX10) of Eremothecium gossypii (strain ATCC 10895 / CBS 109.51 / FGSC 9923 / NRRL Y-1056) (Yeast).